The following is a 222-amino-acid chain: Thymidylate kinase (222 aa).

10 to 17 (GLEGAGKS) lines the ATP pocket.

Belongs to the thymidylate kinase family.

The catalysed reaction is dTMP + ATP = dTDP + ADP. Functionally, phosphorylation of dTMP to form dTDP in both de novo and salvage pathways of dTTP synthesis. The protein is Thymidylate kinase of Alteromonas mediterranea (strain DSM 17117 / CIP 110805 / LMG 28347 / Deep ecotype).